The chain runs to 92 residues: SPbeta prophage-derived uncharacterized protein YopY (92 aa).

This chain is SPbeta prophage-derived uncharacterized protein YopY (yopY), found in Bacillus subtilis (strain 168).